The primary structure comprises 508 residues: Lysine--tRNA ligase (508 aa).

Residues glutamate 418 and glutamate 425 each contribute to the Mg(2+) site.

This sequence belongs to the class-II aminoacyl-tRNA synthetase family. Homodimer. Requires Mg(2+) as cofactor.

It is found in the cytoplasm. The catalysed reaction is tRNA(Lys) + L-lysine + ATP = L-lysyl-tRNA(Lys) + AMP + diphosphate. The sequence is that of Lysine--tRNA ligase from Burkholderia pseudomallei (strain 668).